The following is an 860-amino-acid chain: Probable beta-glucosidase A (860 aa).

The N-terminal stretch at 1–19 (MRFTSIEAVALTAVSLASA) is a signal peptide. Residues asparagine 61, asparagine 211, and asparagine 252 are each glycosylated (N-linked (GlcNAc...) asparagine). The active site involves aspartate 280. N-linked (GlcNAc...) asparagine glycosylation is found at asparagine 315, asparagine 322, asparagine 354, asparagine 387, asparagine 442, asparagine 523, asparagine 542, asparagine 564, asparagine 658, asparagine 690, and asparagine 712.

The protein belongs to the glycosyl hydrolase 3 family.

It is found in the secreted. The enzyme catalyses Hydrolysis of terminal, non-reducing beta-D-glucosyl residues with release of beta-D-glucose.. The protein operates within glycan metabolism; cellulose degradation. Beta-glucosidases are one of a number of cellulolytic enzymes involved in the degradation of cellulosic biomass. Catalyzes the last step releasing glucose from the inhibitory cellobiose. This chain is Probable beta-glucosidase A (bglA), found in Aspergillus niger (strain ATCC MYA-4892 / CBS 513.88 / FGSC A1513).